Consider the following 719-residue polypeptide: Exonuclease mut-7 homolog (719 aa).

A disordered region spans residues 1-22 (MSKSNNVAPPCRQDQLGFVPAG). Residues 575–629 (NLANLVRLCLGKKLDKSNQFSNWAQRPLRKEQLRYAALDAFCLLEIYDAIEKQLT) form the 3'-5' exonuclease domain. A disordered region spans residues 644–719 (NDVRPPSDSG…FEGPNTKSVL (76 aa)). A compositionally biased stretch (basic residues) spans 667–678 (RRNHRDKYNKRH). Composition is skewed to polar residues over residues 683 to 692 (DSNSGNSSRA) and 706 to 719 (EQQT…KSVL).

Belongs to the mut-7 family. It depends on Mg(2+) as a cofactor.

Possesses 3'-5' exoribonuclease activity. Required for 3'-end trimming of AGO1-bound miRNAs. The polypeptide is Exonuclease mut-7 homolog (Aedes aegypti (Yellowfever mosquito)).